The chain runs to 113 residues: Large ribosomal subunit protein uL22 (113 aa).

It belongs to the universal ribosomal protein uL22 family. In terms of assembly, part of the 50S ribosomal subunit.

Its function is as follows. This protein binds specifically to 23S rRNA; its binding is stimulated by other ribosomal proteins, e.g. L4, L17, and L20. It is important during the early stages of 50S assembly. It makes multiple contacts with different domains of the 23S rRNA in the assembled 50S subunit and ribosome. Functionally, the globular domain of the protein is located near the polypeptide exit tunnel on the outside of the subunit, while an extended beta-hairpin is found that lines the wall of the exit tunnel in the center of the 70S ribosome. The polypeptide is Large ribosomal subunit protein uL22 (Halothermothrix orenii (strain H 168 / OCM 544 / DSM 9562)).